The primary structure comprises 231 residues: Nuclear transcription factor Y subunit C-9 (231 aa).

Positions 211 to 231 (NPYMGQPMWQQQAPDQPDQEN) are disordered.

This sequence belongs to the NFYC/HAP5 subunit family. Heterotrimeric transcription factor composed of three components, NF-YA, NF-YB and NF-YC. Interacts with NFYA2, NFYB2, CO and RGA. Interacts with REF6 (via N-terminus). As to expression, ubiquitous. Present in etiolated seedlings.

The protein resides in the nucleus. Functionally, stimulates the transcription of various genes by recognizing and binding to a CCAAT motif in promoters. Interacts with REF6 to directly regulate SOC1 transcription in response to flowering signals from photoperiod and gibberellic acid pathways. In Arabidopsis thaliana (Mouse-ear cress), this protein is Nuclear transcription factor Y subunit C-9 (NFYC9).